The primary structure comprises 597 residues: uncharacterized protein (597 aa).

Residues 48–198 enclose the Helicase ATP-binding domain; that stretch reads LHPYNPYSSL…DSILSLTKET (151 aa). 61-68 provides a ligand contact to ATP; it reads YDVGLGKT. The DEVH box signature appears at 146–149; the sequence is DEVH. Residues 275–467 enclose the Helicase C-terminal domain; that stretch reads KINAFINSIK…DIPKIDNEMV (193 aa).

Belongs to the helicase family.

Its function is as follows. The presence of the two linear plasmids, termed pGKL1 and pGKL2, in strains of Kluyveromyces lactis confers the killer phenotype to the host cell, by promoting the secretion of a toxin able to inhibit the growth of sensitive strains. This is an uncharacterized protein from Kluyveromyces lactis (strain ATCC 8585 / CBS 2359 / DSM 70799 / NBRC 1267 / NRRL Y-1140 / WM37) (Yeast).